We begin with the raw amino-acid sequence, 721 residues long: Choline O-acetyltransferase (721 aa).

The active-site Proton acceptor is the histidine 419. CoA is bound by residues 496–508, serine 534, and glutamine 656; that span reads GKTFIKSCQVSPD.

It belongs to the carnitine/choline acetyltransferase family. The 54 kDa and 13 kDa chains exist as a heterodimer. In terms of processing, the N-terminus of choline O-acetyltransferase 67 kDa and 54 kDa chains are blocked.

It carries out the reaction choline + acetyl-CoA = acetylcholine + CoA. Its function is as follows. Catalyzes the reversible synthesis of acetylcholine (ACh) from acetyl CoA and choline at cholinergic synapses. This is Choline O-acetyltransferase from Drosophila melanogaster (Fruit fly).